The primary structure comprises 342 residues: Probable deoxyhypusine synthase (342 aa).

The Nucleophile role is filled by Lys-307.

It belongs to the deoxyhypusine synthase family. It depends on NAD(+) as a cofactor.

It carries out the reaction [eIF5A protein]-L-lysine + spermidine = [eIF5A protein]-deoxyhypusine + propane-1,3-diamine. The protein operates within protein modification; eIF5A hypusination. Functionally, catalyzes the NAD-dependent oxidative cleavage of spermidine and the subsequent transfer of the butylamine moiety of spermidine to the epsilon-amino group of a specific lysine residue of the eIF-5A precursor protein to form the intermediate deoxyhypusine residue. The polypeptide is Probable deoxyhypusine synthase (dys) (Pyrococcus horikoshii (strain ATCC 700860 / DSM 12428 / JCM 9974 / NBRC 100139 / OT-3)).